The primary structure comprises 135 residues: Putative nickel-responsive regulator (135 aa).

Ni(2+) is bound by residues His79, His90, His92, and Cys98.

Belongs to the transcriptional regulatory CopG/NikR family. Ni(2+) is required as a cofactor.

In terms of biological role, transcriptional regulator. The protein is Putative nickel-responsive regulator of Dictyoglomus turgidum (strain DSM 6724 / Z-1310).